A 445-amino-acid polypeptide reads, in one-letter code: Phosphoglucosamine mutase (445 aa).

Ser102 serves as the catalytic Phosphoserine intermediate. Mg(2+) contacts are provided by Ser102, Asp241, Asp243, and Asp245. Ser102 is subject to Phosphoserine.

The protein belongs to the phosphohexose mutase family. It depends on Mg(2+) as a cofactor. Post-translationally, activated by phosphorylation.

The enzyme catalyses alpha-D-glucosamine 1-phosphate = D-glucosamine 6-phosphate. Its function is as follows. Catalyzes the conversion of glucosamine-6-phosphate to glucosamine-1-phosphate. The protein is Phosphoglucosamine mutase of Rhodococcus opacus (strain B4).